The following is a 225-amino-acid chain: 7-cyano-7-deazaguanine synthase (225 aa).

Residue 10-20 (FSGGQDSTTLA) coordinates ATP. Positions 190, 205, 208, and 211 each coordinate Zn(2+).

The protein belongs to the QueC family. Zn(2+) is required as a cofactor.

The catalysed reaction is 7-carboxy-7-deazaguanine + NH4(+) + ATP = 7-cyano-7-deazaguanine + ADP + phosphate + H2O + H(+). Its pathway is purine metabolism; 7-cyano-7-deazaguanine biosynthesis. In terms of biological role, catalyzes the ATP-dependent conversion of 7-carboxy-7-deazaguanine (CDG) to 7-cyano-7-deazaguanine (preQ(0)). The chain is 7-cyano-7-deazaguanine synthase from Helicobacter acinonychis (strain Sheeba).